The sequence spans 924 residues: MADYKHTLNLPQTDFPMRGNLAQREPEQLRWWQEHEIYRKQREAFADCPTFMLHDGPPYANGQIHVGHALNKTLKDIIIKSRHLLGYNSPYVPGWDCHGLPIEQKVEQKIGKPNQKVSATEFRAACRRYAAEQVALQKDGFMRLGIFGFWDQPYLTMNFETEAQIVRALRDIVAAGHVTQGFKPINWCFDCASSLAEAEVEYQDKTSYSIDVAFAVKDVAALAKIMHADVVPAAVDVVIWTTTPWTLPANVAVSIHPEFYYVLVEIEGWYCVVAEELIPALKSRWKKSADWRICGRALGKDLDRLTLRHPFIDRDVLLINGTHVTLDAGTGCVHTAPAHGVEDYDVCQQYGIDLIHCVLGNGLYNDDTPHFAGQHIFAAEPQIIELLQTQNRLIAVEKITHSYPHCWRHKTPTIYRATTQWFISMDKAGLRQKALDGLNEVAFTPDWGKPRLLNMIAHRPDWCISRQRYWGVPLCFVVDKQTGQLHPDIVNIMDKAASAIEQKGVEAWYELSLDTLLSGKEVDRYEKLNDVLDVWFDSGTTHYSVLKKRAELSYPADLYLEGSDQHRGWFHSSLLTASAITGKPPYKALLTHGFTVDEDGRKMSKSLGNVVDPNQVIKTLGADILRLWVASADYTAEVSLSPNILNQRADAYRRMRNTCRFLLANLHDFDPEKNSVAYEKLLPLDRYVIAVAHDLQEKIKKLYVSYDFHLIYQEIFNFCSVMLGGFYLDVIKDRQYTVAQNALARRSAQTAIFHIIEAMVRWLAPILSFTAEEIWRYLPGKREESVFLTKFYEGLQPLNDDFLSMHDWELLLQLREKVNAALEKARNQGIIGGSLEAMVVLHLPPQEYEIAARFEQELRFILIVSAVNVQPSAALSIEVQHAIGEKCERCWHYLPDVGTDHQHPTLCKRCIENVDGGGELRRFA.

The 'HIGH' region signature appears at 58–68 (PYANGQIHVGH). Glu-561 is a binding site for L-isoleucyl-5'-AMP. Residues 602-606 (KMSKS) carry the 'KMSKS' region motif. Lys-605 is an ATP binding site. Zn(2+)-binding residues include Cys-887, Cys-890, Cys-907, and Cys-910.

It belongs to the class-I aminoacyl-tRNA synthetase family. IleS type 1 subfamily. As to quaternary structure, monomer. The cofactor is Zn(2+).

It localises to the cytoplasm. The enzyme catalyses tRNA(Ile) + L-isoleucine + ATP = L-isoleucyl-tRNA(Ile) + AMP + diphosphate. Functionally, catalyzes the attachment of isoleucine to tRNA(Ile). As IleRS can inadvertently accommodate and process structurally similar amino acids such as valine, to avoid such errors it has two additional distinct tRNA(Ile)-dependent editing activities. One activity is designated as 'pretransfer' editing and involves the hydrolysis of activated Val-AMP. The other activity is designated 'posttransfer' editing and involves deacylation of mischarged Val-tRNA(Ile). In Dichelobacter nodosus (strain VCS1703A), this protein is Isoleucine--tRNA ligase.